The chain runs to 387 residues: F-box protein At5g41490 (387 aa).

In terms of domain architecture, F-box spans 2 to 47 (ATMITNLRRDLIEEIISRVPLRSMKAVRLTCKSWNNISKSEIFTKM).

This Arabidopsis thaliana (Mouse-ear cress) protein is F-box protein At5g41490.